Here is a 349-residue protein sequence, read N- to C-terminus: Merozoite surface protein P38 (349 aa).

An N-terminal signal peptide occupies residues 1–21 (MKRWSIITGIVIIFCILTCKG). 6-Cys domains follow at residues 22 to 149 (QVEN…ISNG) and 153 to 301 (KIPG…YLTN). Intrachain disulfides connect Cys77–Cys127, Cys157–Cys183, Cys197–Cys278, and Cys208–Cys276. N-linked (GlcNAc...) asparagine glycans are attached at residues Asn294, Asn295, and Asn301. A lipid anchor (GPI-anchor amidated asparagine) is attached at Asn315. A propeptide spans 316 to 349 (SEIFERIEREEISFAFSSYLSITLILLYLFFLNF) (removed in mature form).

It localises to the cell surface. Its subcellular location is the cell membrane. The sequence is that of Merozoite surface protein P38 (PFS38) from Plasmodium falciparum (isolate 3D7).